Here is a 237-residue protein sequence, read N- to C-terminus: Splicing factor U2AF 35 kDa subunit (237 aa).

Ala-2 is modified (N-acetylalanine). A C3H1-type 1 zinc finger spans residues 12–40; it reads EKDKVNCSFYFKIGACRHGDRCSRLHNKP. At Lys-39 the chain carries N6-methyllysine. 2 positions are modified to phosphoserine: Ser-61 and Ser-145. Residues 65 to 147 form the RRM domain; sequence LRCAVSDVEM…QPIHAELSPV (83 aa). The segment at 149–176 adopts a C3H1-type 2 zinc-finger fold; that stretch reads DFREACCRQYEMGECTRGGFCNFMHLKP. Arg-165 is subject to Omega-N-methylarginine. The tract at residues 185-237 is disordered; the sequence is LYGRRRKKHRSRSRSRERRSRSRDRGRGGGGGGGGGRERDRRRSRDRERSGRF. Residues 188-208 show a composition bias toward basic residues; the sequence is RRRKKHRSRSRSRERRSRSRD. The segment covering 220-237 has biased composition (basic and acidic residues); the sequence is GRERDRRRSRDRERSGRF.

This sequence belongs to the splicing factor SR family. Identified in the spliceosome C complex. Heterodimer with U2AF2. Interacts (via RS domain) with PHF5A (via N-terminus). Interacts with ZRANB2. Interacts with SDE2. Interacts with SF3B1.

The protein localises to the nucleus. Its subcellular location is the nucleus speckle. In terms of biological role, plays a critical role in both constitutive and enhancer-dependent splicing by mediating protein-protein interactions and protein-RNA interactions required for accurate 3'-splice site selection. Recruits U2 snRNP to the branch point. Directly mediates interactions between U2AF2 and proteins bound to the enhancers and thus may function as a bridge between U2AF2 and the enhancer complex to recruit it to the adjacent intron. The sequence is that of Splicing factor U2AF 35 kDa subunit (U2AF1) from Bos taurus (Bovine).